We begin with the raw amino-acid sequence, 254 residues long: Dihydroorotate dehydrogenase B (NAD(+)), electron transfer subunit (254 aa).

An FAD-binding FR-type domain is found at 1–99 (MLQTEMKVIQ…LGPLGKGFDI (99 aa)). Residues 50-53 (RPIS), 67-69 (LYR), and 74-75 (GT) contribute to the FAD site. The [2Fe-2S] cluster site is built by Cys218, Cys223, Cys226, and Cys241.

It belongs to the PyrK family. Heterotetramer of 2 PyrK and 2 PyrD type B subunits. [2Fe-2S] cluster serves as cofactor. The cofactor is FAD.

Its pathway is pyrimidine metabolism; UMP biosynthesis via de novo pathway; orotate from (S)-dihydroorotate (NAD(+) route): step 1/1. Responsible for channeling the electrons from the oxidation of dihydroorotate from the FMN redox center in the PyrD type B subunit to the ultimate electron acceptor NAD(+). The polypeptide is Dihydroorotate dehydrogenase B (NAD(+)), electron transfer subunit (Listeria monocytogenes serotype 4a (strain HCC23)).